The chain runs to 189 residues: uncharacterized protein (189 aa).

Belongs to the isochorismatase family.

This is an uncharacterized protein from Bacillus subtilis (strain 168).